Consider the following 501-residue polypeptide: IQ domain-containing protein M (501 aa).

Residues 237 to 247 show a composition bias toward basic and acidic residues; sequence ERQPIKPEPKS. The interval 237–262 is disordered; the sequence is ERQPIKPEPKSQPRIKGTPNKTDKLD. Residues 290–319 enclose the IQ domain; the sequence is LIRMVTVMQAHVRGWLERKRLQRVMTKALD.

The chain is IQ domain-containing protein M from Homo sapiens (Human).